A 346-amino-acid chain; its full sequence is MKSVVNDTDGIVRVAESVIPEIKHQDEVRVKIASSGLCGSDLPRIFKNGAHYYPITLGHEFSGYIDAVGSGVDDLHPGDAVACVPLLPCFTCPECLKGFYSQCAKYDFIGSRRDGGFAEYIVVKRKNVFALPTDMPIEDGAFIEPITVGLHAFHLAQGCENKNVIIIGAGTIGLLAIQCAVALGAKSVTAIDISSEKLALAKSFGAMQTFNSSEMSAPQMQSVLRELRFNQLILETAGVPQTVELAVEIAGPHAQLALVGTLHQDLHLTSATFGKILRKELTVIGSWMNYSSPWPGQEWETASRLLTERKLSLEPLIAHRGSFESFAQAVRDIARNAMPGKVLLIP.

Residues C38, H59, C89, C92, C95, C103, and E144 each contribute to the Zn(2+) site.

This sequence belongs to the zinc-containing alcohol dehydrogenase family. Zn(2+) is required as a cofactor.

The catalysed reaction is galactitol 1-phosphate + NAD(+) = keto-D-tagatose 6-phosphate + NADH + H(+). Functionally, converts galactitol 1-phosphate to tagatose 6-phosphate. The chain is Galactitol 1-phosphate 5-dehydrogenase (gatD) from Escherichia coli O157:H7.